The chain runs to 486 residues: CUGBP Elav-like family member 4 (486 aa).

A sufficient for RNA-binding and MSE-dependent splicing activity region spans residues 1–298 (MYIKMATLAN…AAFAAAQMQQ (298 aa)). A compositionally biased stretch (polar residues) spans 18–28 (LSTNGLGSSPG). Disordered regions lie at residues 18 to 39 (LSTN…LSHS) and 121 to 149 (LPGM…QPPS). The region spanning 54-135 (IKLFIGQIPR…RPIQVKPADS (82 aa)) is the RRM 1 domain. The span at 138–149 (RGGSSCLRQPPS) shows a compositional bias: polar residues. One can recognise an RRM 2 domain in the interval 152-232 (RKLFVGMLNK…SSLVVKFADT (81 aa)). A necessary for TNNT2 exon 5 inclusion region spans residues 239-258 (RRMQQMAGQMGMFNPMAIPF). The RRM 3 domain maps to 404–479 (PQPPPMIPQQ…KRLKVQLKRP (76 aa)).

It belongs to the CELF/BRUNOL family. As to expression, ubiquitous. Strongly expressed in the cerebellum, hippocampus, amygdala, temporal and frontal cortex and frontal lobes.

The protein resides in the nucleus. It localises to the cytoplasm. In terms of biological role, RNA-binding protein implicated in the regulation of pre-mRNA alternative splicing. Mediates exon inclusion and/or exclusion in pre-mRNA that are subject to tissue-specific and developmentally regulated alternative splicing. Specifically activates exon 5 inclusion of cardiac isoforms of TNNT2 during heart remodeling at the juvenile to adult transition. Promotes exclusion of both the smooth muscle (SM) and non-muscle (NM) exons in actinin pre-mRNAs. Activates the splicing of MAPT/Tau exon 10. Binds to muscle-specific splicing enhancer (MSE) intronic sites flanking the alternative exon 5 of TNNT2 pre-mRNA. In Homo sapiens (Human), this protein is CUGBP Elav-like family member 4 (CELF4).